The chain runs to 303 residues: Elongation factor Ts (303 aa).

Residues 80 to 83 are involved in Mg(2+) ion dislocation from EF-Tu; it reads TDFV.

The protein belongs to the EF-Ts family.

The protein localises to the cytoplasm. In terms of biological role, associates with the EF-Tu.GDP complex and induces the exchange of GDP to GTP. It remains bound to the aminoacyl-tRNA.EF-Tu.GTP complex up to the GTP hydrolysis stage on the ribosome. This chain is Elongation factor Ts, found in Clostridium botulinum (strain Eklund 17B / Type B).